The sequence spans 138 residues: Gamma-glutamylaminecyclotransferase (138 aa).

E63 (proton acceptor) is an active-site residue.

The protein belongs to the gamma-glutamylcyclotransferase family.

It carries out the reaction epsilon-(gamma-L-glutamyl)-L-lysine = 5-oxo-L-proline + L-lysine. Its function is as follows. May contribute to degradation of proteins cross-linked by transglutaminases by degrading the cross-link between a lysine and a glutamic acid residue. Catalyzes the formation of 5-oxo-L-proline from L-gamma-glutamyl-L-epsilon-lysine. The polypeptide is Gamma-glutamylaminecyclotransferase (ggact) (Xenopus laevis (African clawed frog)).